The primary structure comprises 178 residues: Nucleoside-triphosphatase THEP1 (178 aa).

ATP-binding positions include 9–16 (GPVGSIKA) and 101–108 (VIIIDEVG).

Belongs to the THEP1 NTPase family.

It carries out the reaction a ribonucleoside 5'-triphosphate + H2O = a ribonucleoside 5'-diphosphate + phosphate + H(+). Its function is as follows. Has nucleotide phosphatase activity towards ATP, GTP, CTP, TTP and UTP. May hydrolyze nucleoside diphosphates with lower efficiency. The chain is Nucleoside-triphosphatase THEP1 from Thermoplasma volcanium (strain ATCC 51530 / DSM 4299 / JCM 9571 / NBRC 15438 / GSS1).